The chain runs to 3411 residues: Genome polyprotein (3411 aa).

Residues 1–104 are Cytoplasmic-facing; it reads MSGRKAQGKT…LSSRKRRSHD (104 aa). The propeptide at 102-121 is ER anchor for the capsid protein C, removed in mature form by serine protease NS3; that stretch reads SHDALAVQFLILGMLLMAGG. Residues 105-125 traverse the membrane as a helical segment; that stretch reads ALAVQFLILGMLLMAGGVTLV. Topologically, residues 126-244 are extracellular; it reads RKNRWLLLNV…GERQLQKIER (119 aa). Asparagine 134 and asparagine 150 each carry an N-linked (GlcNAc...) asparagine; by host glycan. A helical transmembrane segment spans residues 245–265; it reads WLVRNPFFAVTALTIAYLVGS. Residues 266–270 are Cytoplasmic-facing; it reads NMTQR. The helical transmembrane segment at 271-285 threads the bilayer; that stretch reads VVIALLVLAVGPAYS. At 286–730 the chain is on the extracellular side; it reads AHCIGITDRD…TVFGSAFQGL (445 aa). 8 cysteine pairs are disulfide-bonded: cysteine 288–cysteine 315, cysteine 345–cysteine 401, cysteine 345–cysteine 406, cysteine 359–cysteine 390, cysteine 377–cysteine 401, cysteine 377–cysteine 406, cysteine 467–cysteine 568, and cysteine 585–cysteine 615. Residues 383–396 are fusion peptide; it reads DRGWGNGCGLFGKG. Residues 731–751 traverse the membrane as a helical segment; that stretch reads FGGLSWITKVIMGAVLIWVGI. The Extracellular segment spans residues 752–757; it reads NTRNMT. Residues 758-778 form a helical membrane-spanning segment; the sequence is MSMSMILVGVIMMFLSLGVGA. Topologically, residues 779–1132 are extracellular; it reads DQGCAINFGK…LVRSWVTAGE (354 aa). 6 cysteine pairs are disulfide-bonded: cysteine 782/cysteine 793, cysteine 833/cysteine 921, cysteine 957/cysteine 1002, cysteine 1058/cysteine 1107, cysteine 1069/cysteine 1091, and cysteine 1090/cysteine 1094. Residues asparagine 908 and asparagine 986 are each glycosylated (N-linked (GlcNAc...) asparagine; by host). The helical transmembrane segment at 1133 to 1153 threads the bilayer; sequence IHAVPFGLVSMMIAMEVVLRK. The Cytoplasmic segment spans residues 1154–1201; that stretch reads RQGPKQMLVGGVVLLGAMLVGQVTLLDLLKLTVAVGLHFHEMNNGGDA. A helical transmembrane segment spans residues 1202 to 1222; sequence MYMALIAAFSIRPGLLIGFGL. Over 1223-1287 the chain is Lumenal; the sequence is RTLWSPRERL…ILPLMALLTP (65 aa). A helical transmembrane segment spans residues 1288–1308; the sequence is VTMAEVRLAAMLFCTVVIIGV. The Cytoplasmic portion of the chain corresponds to 1309–1355; it reads LHQNSKDTSMQKTIPLVALTLTSYLGLTQPFLGLCAFLATRLFGRRS. A helical membrane pass occupies residues 1356-1376; sequence IPVNEALAAAGLVGVLAGLAF. The Lumenal portion of the chain corresponds to 1377-1378; it reads QE. The helical transmembrane segment at 1379–1399 threads the bilayer; it reads MENFLGPIAVGGILMMLVSVA. Over 1400–1456 the chain is Cytoplasmic; it reads GRVDGLELRKLGEVSWEEEAEISGSSARYDVALSEQGEFKLLSEEKVPWDQVVMTSL. Positions 1407–1446 are interacts with and activates NS3 protease; sequence LRKLGEVSWEEEAEISGSSARYDVALSEQGEFKLLSEEKV. Residues 1457–1477 constitute an intramembrane region (helical); sequence ALVGAAIHPFALLLVLAGWLF. Topologically, residues 1478-2157 are cytoplasmic; that stretch reads HVKGARRSGD…RNALSMMPEA (680 aa). One can recognise a Peptidase S7 domain in the interval 1485 to 1665; the sequence is SGDVLWDIPT…EVKEEGKEEL (181 aa). Catalysis depends on charge relay system; for serine protease NS3 activity residues histidine 1537, aspartate 1561, and serine 1622. In terms of domain architecture, Helicase ATP-binding spans 1669–1825; that stretch reads PTMLKKGMTT…HSNGEIEDVQ (157 aa). Residues 1673 to 1676 form an important for RNA-binding region; the sequence is KKGM. 1682 to 1689 contacts ATP; the sequence is FHPGAGKT. The DEAH box signature appears at 1773-1776; the sequence is DEAH. The 178-residue stretch at 1820–1997 folds into the Helicase C-terminal domain; sequence EIEDVQTDIP…VRGGMVAPLY (178 aa). Lysine 1877 carries the post-translational modification N6-acetyllysine; by host. A disordered region spans residues 1942–1961; sequence AAQRRGRIGRNPNRDGDSYY. A helical transmembrane segment spans residues 2158–2178; it reads MTIAMLFILAGLLTSGMVIFF. At 2179–2186 the chain is on the lumenal side; that stretch reads MSPKGISR. An intramembrane region (helical) is located at residues 2187–2207; it reads MSMAMGTMAGCGYLMFLGGVK. Over 2208-2209 the chain is Lumenal; it reads PT. The chain crosses the membrane as a helical span at residues 2210-2230; it reads HISYIMLIFFVLMVVVIPEPG. Residues 2231 to 2241 are Cytoplasmic-facing; it reads QQRSIQDNQVA. The helical transmembrane segment at 2242–2262 threads the bilayer; it reads YLIIGILTLVSVVAANELGML. Topologically, residues 2263–2293 are lumenal; the sequence is EKTKEDLFGKKDLIPSSASPWSWPDLDLKPG. An intramembrane region (helical) is located at residues 2294-2314; sequence AAWTVYVGIVTMLSPMLHHWI. At 2315–2360 the chain is on the lumenal side; that stretch reads KVEYGNLSLSGIAQSASVLSFMDKGIPFMKMNISVIILLVSGWNSI. Residues 2361–2380 traverse the membrane as a helical segment; sequence TVMPLLCGIGCAMLHWSLIL. The Cytoplasmic portion of the chain corresponds to 2381-2421; that stretch reads PGIKAQQSKLAQRRVFHGVAKNPVVDGNPTVDIEEAPEMPA. A helical transmembrane segment spans residues 2422–2442; it reads LYEKKLALYLLLALSLASVAM. The Lumenal segment spans residues 2443-2445; it reads CRT. The chain crosses the membrane as a helical span at residues 2446–2466; the sequence is PFSLAEGIVLASAALGPLIEG. Residues 2467–3411 lie on the Cytoplasmic side of the membrane; sequence NTSLLWNGPM…DADLQPGELI (945 aa). Residues 2507–2771 form the mRNA cap 0-1 NS5-type MT domain; the sequence is GRANGKTLGE…DVILPIGTRS (265 aa). Serine 2562 is a binding site for S-adenosyl-L-methionine. The residue at position 2562 (serine 2562) is a Phosphoserine. Catalysis depends on lysine 2567, which acts as the For 2'-O-MTase activity. S-adenosyl-L-methionine is bound by residues glycine 2592, tryptophan 2593, threonine 2610, leucine 2611, aspartate 2637, and isoleucine 2638. Residue aspartate 2652 is the For 2'-O-MTase activity of the active site. Isoleucine 2653 contacts S-adenosyl-L-methionine. Residues lysine 2688 and glutamate 2724 each act as for 2'-O-MTase activity in the active site. Tyrosine 2726 is an S-adenosyl-L-methionine binding site. The Nuclear localization signal motif lies at 2878-2911; it reads RKIMKVVNRWLFRHLAREKNPRLCTKEEFIAKVR. Residues glutamate 2945, histidine 2949, cysteine 2954, and cysteine 2957 each coordinate Zn(2+). One can recognise a RdRp catalytic domain in the interval 3035–3187; sequence GGFYADDTAG…RPIDDRFGLA (153 aa). Zn(2+) contacts are provided by histidine 3222, cysteine 3238, and cysteine 3357.

This sequence in the N-terminal section; belongs to the class I-like SAM-binding methyltransferase superfamily. mRNA cap 0-1 NS5-type methyltransferase family. As to quaternary structure, homodimer. Interacts (via N-terminus) with host EXOC1 (via C-terminus); this interaction results in EXOC1 degradation through the proteasome degradation pathway. In terms of assembly, forms heterodimers with envelope protein E in the endoplasmic reticulum and Golgi. Homodimer; in the endoplasmic reticulum and Golgi. Interacts with protein prM. Interacts with non-structural protein 1. As to quaternary structure, homodimer; Homohexamer when secreted. Interacts with envelope protein E. In terms of assembly, interacts (via N-terminus) with serine protease NS3. Forms a heterodimer with serine protease NS3. May form homooligomers. As to quaternary structure, forms a heterodimer with NS2B. Interacts with non-structural protein 2A (via N-terminus). Interacts with NS4B. Interacts with unphosphorylated RNA-directed RNA polymerase NS5; this interaction stimulates RNA-directed RNA polymerase NS5 guanylyltransferase activity. NS3 interacts with host PDCD6IP; this interaction contributes to virion release. In terms of assembly, interacts with serine protease NS3. Homodimer. Interacts with host STAT2; this interaction prevents the establishment of cellular antiviral state. Interacts with serine protease NS3. Interacts with host TRIM23; this interaction leads to NS5 ubiquitination. Post-translationally, specific enzymatic cleavages in vivo yield mature proteins. The nascent capsid protein C contains a C-terminal hydrophobic domain that act as a signal sequence for translocation of prM into the lumen of the ER. Mature capsid protein C is cleaved at a site upstream of this hydrophobic domain by NS3. prM is cleaved in post-Golgi vesicles by a host furin, releasing the mature small envelope protein M, and peptide pr. Non-structural protein 2A-alpha, a C-terminally truncated form of non-structural protein 2A, results from partial cleavage by NS3. Specific enzymatic cleavages in vivo yield mature proteins peptide 2K acts as a signal sequence and is removed from the N-terminus of NS4B by the host signal peptidase in the ER lumen. Signal cleavage at the 2K-4B site requires a prior NS3 protease-mediated cleavage at the 4A-2K site. In terms of processing, cleaved in post-Golgi vesicles by a host furin, releasing the mature small envelope protein M, and peptide pr. This cleavage is incomplete as up to 30% of viral particles still carry uncleaved prM. N-glycosylated. Post-translationally, N-glycosylated. The excreted form is glycosylated and this is required for efficient secretion of the protein from infected cells. In terms of processing, polyubiquitinated; ubiquitination is probably mediated by host TRIM23 and is prerequisite for NS5-STAT2 interaction. NS5 is not ISGylated or sumoylated. Acetylated by host KAT5. Acetylation modulates NS3 RNA-binding and unwinding activities and plays an important positive role for viral replication. Post-translationally, phosphorylated on serines residues. This phosphorylation may trigger NS5 nuclear localization.

It localises to the virion. The protein resides in the host nucleus. It is found in the host cytoplasm. The protein localises to the host perinuclear region. Its subcellular location is the secreted. It localises to the virion membrane. The protein resides in the host endoplasmic reticulum membrane. The catalysed reaction is Selective hydrolysis of -Xaa-Xaa-|-Yaa- bonds in which each of the Xaa can be either Arg or Lys and Yaa can be either Ser or Ala.. It catalyses the reaction RNA(n) + a ribonucleoside 5'-triphosphate = RNA(n+1) + diphosphate. It carries out the reaction a ribonucleoside 5'-triphosphate + H2O = a ribonucleoside 5'-diphosphate + phosphate + H(+). The enzyme catalyses ATP + H2O = ADP + phosphate + H(+). The catalysed reaction is a 5'-end (5'-triphosphoguanosine)-ribonucleoside in mRNA + S-adenosyl-L-methionine = a 5'-end (N(7)-methyl 5'-triphosphoguanosine)-ribonucleoside in mRNA + S-adenosyl-L-homocysteine. It catalyses the reaction a 5'-end (N(7)-methyl 5'-triphosphoguanosine)-ribonucleoside in mRNA + S-adenosyl-L-methionine = a 5'-end (N(7)-methyl 5'-triphosphoguanosine)-(2'-O-methyl-ribonucleoside) in mRNA + S-adenosyl-L-homocysteine + H(+). Its function is as follows. Plays a role in virus budding by binding to the cell membrane and gathering the viral RNA into a nucleocapsid that forms the core of a mature virus particle. During virus entry, may induce genome penetration into the host cytoplasm after hemifusion induced by the surface proteins. Can migrate to the cell nucleus where it modulates host functions. In terms of biological role, inhibits RNA silencing by interfering with host Dicer. Prevents premature fusion activity of envelope proteins in trans-Golgi by binding to envelope protein E at pH6.0. After virion release in extracellular space, gets dissociated from E dimers. Functionally, acts as a chaperone for envelope protein E during intracellular virion assembly by masking and inactivating envelope protein E fusion peptide. prM is the only viral peptide matured by host furin in the trans-Golgi network probably to avoid catastrophic activation of the viral fusion activity in acidic Golgi compartment prior to virion release. prM-E cleavage is inefficient, and many virions are only partially matured. These uncleaved prM would play a role in immune evasion. Its function is as follows. May play a role in virus budding. Exerts cytotoxic effects by activating a mitochondrial apoptotic pathway through M ectodomain. May display a viroporin activity. In terms of biological role, binds to host cell surface receptor and mediates fusion between viral and cellular membranes. Envelope protein is synthesized in the endoplasmic reticulum in the form of heterodimer with protein prM. They play a role in virion budding in the ER, and the newly formed immature particle is covered with 60 spikes composed of heterodimer between precursor prM and envelope protein E. The virion is transported to the Golgi apparatus where the low pH causes dissociation of PrM-E heterodimers and formation of E homodimers. prM-E cleavage is inefficient, and many virions are only partially matured. These uncleaved prM would play a role in immune evasion. Involved in immune evasion, pathogenesis and viral replication. Once cleaved off the polyprotein, is targeted to three destinations: the viral replication cycle, the plasma membrane and the extracellular compartment. Essential for viral replication. Required for formation of the replication complex and recruitment of other non-structural proteins to the ER-derived membrane structures. Excreted as a hexameric lipoparticle that plays a role against host immune response. Antagonizing the complement function. Binds to the host macrophages and dendritic cells. Inhibits signal transduction originating from Toll-like receptor 3 (TLR3). Functionally, component of the viral RNA replication complex that functions in virion assembly and antagonizes the host immune response. Its function is as follows. Required cofactor for the serine protease function of NS3. May have membrane-destabilizing activity and form viroporins. In terms of biological role, displays three enzymatic activities: serine protease, NTPase and RNA helicase. NS3 serine protease, in association with NS2B, performs its autocleavage and cleaves the polyprotein at dibasic sites in the cytoplasm: C-prM, NS2A-NS2B, NS2B-NS3, NS3-NS4A, NS4A-2K and NS4B-NS5. NS3 RNA helicase binds RNA and unwinds dsRNA in the 3' to 5' direction. Also plays a role in virus assembly. Regulates the ATPase activity of the NS3 helicase activity. NS4A allows NS3 helicase to conserve energy during unwinding. Functionally, functions as a signal peptide for NS4B and is required for the interferon antagonism activity of the latter. Its function is as follows. Induces the formation of ER-derived membrane vesicles where the viral replication takes place. Inhibits interferon (IFN)-induced host STAT1 phosphorylation and nuclear translocation, thereby preventing the establishment of cellular antiviral state by blocking the IFN-alpha/beta pathway. In terms of biological role, replicates the viral (+) and (-) RNA genome, and performs the capping of genomes in the cytoplasm. NS5 methylates viral RNA cap at guanine N-7 and ribose 2'-O positions. Besides its role in RNA genome replication, also prevents the establishment of cellular antiviral state by blocking the interferon-alpha/beta (IFN-alpha/beta) signaling pathway. IFN-I induces binding of NS5 to host IFN-activated transcription factor STAT2, preventing its transcriptional activity. Host TRIM23 is the E3 ligase that interacts with and polyubiquitinates NS5 to promote its binding to STAT2 and trigger IFN-I signaling inhibition. The polypeptide is Genome polyprotein (Yellow fever virus (isolate Ivory Coast/1999) (YFV)).